The following is a 431-amino-acid chain: 23S rRNA (uracil(1939)-C(5))-methyltransferase RlmD (431 aa).

Residues 8–68 (KRRVTTRQII…SKYSRGQVKR (61 aa)) form the TRAM domain. Residues Cys-81, Cys-87, Cys-90, and Cys-162 each coordinate [4Fe-4S] cluster. S-adenosyl-L-methionine is bound by residues Gln-265, Phe-294, Asn-299, Glu-315, Asn-342, and Asp-363. Cys-389 (nucleophile) is an active-site residue.

It belongs to the class I-like SAM-binding methyltransferase superfamily. RNA M5U methyltransferase family. RlmD subfamily.

The enzyme catalyses uridine(1939) in 23S rRNA + S-adenosyl-L-methionine = 5-methyluridine(1939) in 23S rRNA + S-adenosyl-L-homocysteine + H(+). Catalyzes the formation of 5-methyl-uridine at position 1939 (m5U1939) in 23S rRNA. The sequence is that of 23S rRNA (uracil(1939)-C(5))-methyltransferase RlmD from Enterobacter sp. (strain 638).